The primary structure comprises 450 residues: Phosphoglucosamine mutase (450 aa).

Serine 101 serves as the catalytic Phosphoserine intermediate. Serine 101, aspartate 241, aspartate 243, and aspartate 245 together coordinate Mg(2+). Serine 101 is modified (phosphoserine).

It belongs to the phosphohexose mutase family. Mg(2+) serves as cofactor. Post-translationally, activated by phosphorylation.

It carries out the reaction alpha-D-glucosamine 1-phosphate = D-glucosamine 6-phosphate. Catalyzes the conversion of glucosamine-6-phosphate to glucosamine-1-phosphate. In Listeria innocua serovar 6a (strain ATCC BAA-680 / CLIP 11262), this protein is Phosphoglucosamine mutase.